The sequence spans 324 residues: Probable tRNA pseudouridine synthase B (324 aa).

Asp-72 functions as the Nucleophile in the catalytic mechanism. The PUA domain maps to 239–314 (LPRVVILDSA…LVIETRKVFM (76 aa)).

It belongs to the pseudouridine synthase TruB family. Type 2 subfamily.

It carries out the reaction uridine(55) in tRNA = pseudouridine(55) in tRNA. Its function is as follows. Could be responsible for synthesis of pseudouridine from uracil-55 in the psi GC loop of transfer RNAs. The protein is Probable tRNA pseudouridine synthase B of Methanothermobacter thermautotrophicus (strain ATCC 29096 / DSM 1053 / JCM 10044 / NBRC 100330 / Delta H) (Methanobacterium thermoautotrophicum).